The primary structure comprises 876 residues: Translation initiation factor IF-2 (876 aa).

The tract at residues 164–288 (VEIKEPEEPA…EEPAPHAFSA (125 aa)) is disordered. A compositionally biased stretch (low complexity) spans 179–219 (AAPVAGPEAVPVAPETPSAAPGETVAAVEAEAAPSQPASTE). Residues 244 to 259 (VWKEEKVEKRGLKTRG) show a composition bias toward basic and acidic residues. A tr-type G domain is found at 378-547 (ARAPVVTVMG…LLQAEVLELK (170 aa)). Positions 387 to 394 (GHVDHGKT) are G1. GTP is bound at residue 387-394 (GHVDHGKT). Residues 412–416 (GITQH) form a G2 region. The segment at 433-436 (DTPG) is G3. GTP-binding positions include 433–437 (DTPGH) and 487–490 (TKID). The G4 stretch occupies residues 487–490 (TKID). The interval 523 to 525 (SAK) is G5.

Belongs to the TRAFAC class translation factor GTPase superfamily. Classic translation factor GTPase family. IF-2 subfamily.

It is found in the cytoplasm. One of the essential components for the initiation of protein synthesis. Protects formylmethionyl-tRNA from spontaneous hydrolysis and promotes its binding to the 30S ribosomal subunits. Also involved in the hydrolysis of GTP during the formation of the 70S ribosomal complex. This Nitrosospira multiformis (strain ATCC 25196 / NCIMB 11849 / C 71) protein is Translation initiation factor IF-2.